The chain runs to 76 residues: Exodeoxyribonuclease 7 small subunit (76 aa).

Belongs to the XseB family. As to quaternary structure, heterooligomer composed of large and small subunits.

Its subcellular location is the cytoplasm. The catalysed reaction is Exonucleolytic cleavage in either 5'- to 3'- or 3'- to 5'-direction to yield nucleoside 5'-phosphates.. In terms of biological role, bidirectionally degrades single-stranded DNA into large acid-insoluble oligonucleotides, which are then degraded further into small acid-soluble oligonucleotides. This Staphylococcus haemolyticus (strain JCSC1435) protein is Exodeoxyribonuclease 7 small subunit.